The primary structure comprises 434 residues: Nicotinate phosphoribosyltransferase (434 aa).

Residue H242 is modified to Phosphohistidine; by autocatalysis.

This sequence belongs to the NAPRTase family. In terms of processing, transiently phosphorylated on a His residue during the reaction cycle. Phosphorylation strongly increases the affinity for substrates and increases the rate of nicotinate D-ribonucleotide production. Dephosphorylation regenerates the low-affinity form of the enzyme, leading to product release.

The enzyme catalyses nicotinate + 5-phospho-alpha-D-ribose 1-diphosphate + ATP + H2O = nicotinate beta-D-ribonucleotide + ADP + phosphate + diphosphate. It participates in cofactor biosynthesis; NAD(+) biosynthesis; nicotinate D-ribonucleotide from nicotinate: step 1/1. In terms of biological role, catalyzes the synthesis of beta-nicotinate D-ribonucleotide from nicotinate and 5-phospho-D-ribose 1-phosphate at the expense of ATP. The sequence is that of Nicotinate phosphoribosyltransferase from Sinorhizobium medicae (strain WSM419) (Ensifer medicae).